Reading from the N-terminus, the 209-residue chain is Redox-sensing transcriptional repressor Rex (209 aa).

Residues 16–55 constitute a DNA-binding region (H-T-H motif); the sequence is LYYRFIQNLSLSGKQRVSSAELSEAVKVDSATIRRDFSYF. 90–95 contacts NAD(+); it reads GVGNLG.

Belongs to the transcriptional regulatory Rex family. Homodimer.

It localises to the cytoplasm. Functionally, modulates transcription in response to changes in cellular NADH/NAD(+) redox state. This chain is Redox-sensing transcriptional repressor Rex, found in Bacillus cereus (strain AH187).